A 465-amino-acid chain; its full sequence is UDP-N-acetylmuramoylalanine--D-glutamate ligase (465 aa).

124–130 is a binding site for ATP; sequence GSDGKTT.

Belongs to the MurCDEF family.

The protein resides in the cytoplasm. The enzyme catalyses UDP-N-acetyl-alpha-D-muramoyl-L-alanine + D-glutamate + ATP = UDP-N-acetyl-alpha-D-muramoyl-L-alanyl-D-glutamate + ADP + phosphate + H(+). Its pathway is cell wall biogenesis; peptidoglycan biosynthesis. Cell wall formation. Catalyzes the addition of glutamate to the nucleotide precursor UDP-N-acetylmuramoyl-L-alanine (UMA). In Ruminiclostridium cellulolyticum (strain ATCC 35319 / DSM 5812 / JCM 6584 / H10) (Clostridium cellulolyticum), this protein is UDP-N-acetylmuramoylalanine--D-glutamate ligase.